Here is an 887-residue protein sequence, read N- to C-terminus: MIKLTPAMKQYYDAKKQHSDALIFFRMGDFYESFGEDAKIIAKELEITLTTRGKDIEGEKMPLAGIPYHALDNYLPRLIKKGYKVAICEQLEDPKKAKGIIKRGVVRVVTPGTAIDTSMFTDPSNNYLMSISGGDGDYGVSFLDVSTGEFLTTQFADKSPYDRIASEAARMRPSECIISRTMFSDERLVERLKELNVLVQGFKDEAFDVDSSRKLLERHFNVSTLEGMGCAGLPYATSSAGAALDYALTTQMRELGHVSELSTYSDSEFMMLDSITLRNLEIVKNVRGEGNDTSILKVLDDTNTPMGGRLLQKWLLKPLINVDSIDHRLDALECLANDTMLRFDVRSHLSFVKDIERLIGRVVYGNSNARDLIALKRSLGSVPQIVESMGDDPGCEMLINIRDGLLGFEQLENIVKLIDDAIVDEPPVSVREGGMIRSGYNEKLDELKGMSTGGKTWIASFQQKERDRTGIKSLKVGYNRVFGYYIEITKSNIAQIPDDYIRKQTMRNAERFYTPELKEWEDVILSADEKITALENELFTEITSRIASHASDLQRIAVLIGQLDCTASLAEVAVNNNFVRPNITSDCKILIREGRHPVVEKTVRGGFVPNDTEMDCVDEQFLLITGPNMAGKSTYMRQVSLIVIMAQAGSFVPASHASIGIVDRVFTRVGAFDDLASGQSTFMVEMVELANILNNATPKSLVLLDEIGRGTSTYDGYSIAKAVVEYIHNKGRVGVRSLFATHYHQLTNISSSLKRVKNYHIAVKEDGDDLVFLRKIVPGATDKSYGIHVARLAGVPHKVTQRAKEVLQDIEDESVISKESDSKRGRKKKSAQYTQLMLFDPEGSSAPVAEPDPVVEELKELDVNSMTPIEALNKLSELQKKAGKGGK.

ATP is bound at residue 626–633; it reads GPNMAGKS.

This sequence belongs to the DNA mismatch repair MutS family.

In terms of biological role, this protein is involved in the repair of mismatches in DNA. It is possible that it carries out the mismatch recognition step. This protein has a weak ATPase activity. The polypeptide is DNA mismatch repair protein MutS (Methanococcoides burtonii (strain DSM 6242 / NBRC 107633 / OCM 468 / ACE-M)).